A 125-amino-acid polypeptide reads, in one-letter code: Multifunctional methyltransferase subunit TRM112-like protein (125 aa).

Residues 2–119 (KLLTHNLLSS…SRGIPNMLLS (118 aa)) form the TRM112 domain. Residues Ser119 and Ser125 each carry the phosphoserine modification.

It belongs to the TRM112 family. In terms of assembly, part of the heterodimeric BUD23-TRM112 methyltransferase complex; this heterodimerization is necessary for the metabolic stability and activity of the catalytic subunit BUD23. Part of the heterodimeric N6AMT1-TRM112 methyltransferase complex; this heterodimerization is necessary for S-adenosyl-L-methionine-binding to N6AMT1/HEMK2. Part of the heterodimeric ALKBH8-TRM112 methyltransferase complex. Part of the heterodimeric METTL5-TRM112 methyltransferase complex; this heterodimerization is necessary for the stability of the catalytic subunit METTL5. Part of the heterodimeric THUMPD3-TRM112 methyltransferase complex; this complex forms an active tRNA methyltransferase, where TRMT112 acts as an activator of the catalytic subunit THUMPD3. Part of the heterodimeric THUMPD2-TRM112 methyltransferase complex; this complex forms an active tRNA methyltransferase, where TRMT112 acts as an activator of the catalytic subunit THUMPD2. Part of the heterodimeric TRMT11-TRM112 methyltransferase complex; this complex forms an active tRNA methyltransferase, where TRMT112 acts as an activator of the catalytic subunit TRMT11.

The protein resides in the nucleus. It is found in the nucleoplasm. It localises to the cytoplasm. The protein localises to the perinuclear region. Acts as an activator of both rRNA/tRNA and protein methyltransferases. Together with methyltransferase BUD23, methylates the N(7) position of a guanine in 18S rRNA. The heterodimer with N6AMT1/HEMK2 catalyzes N5-methylation of ETF1 on 'Gln-185', using S-adenosyl L-methionine as methyl donor. The heterodimer with N6AMT1/HEMK2 also monomethylates 'Lys-12' of histone H4 (H4K12me1). The heterodimer with ALKBH8 catalyzes the methylation of 5-carboxymethyl uridine to 5-methylcarboxymethyl uridine at the wobble position of the anticodon loop in target tRNA species. Together with methyltransferase THUMPD3, catalyzes the formation of N(2)-methylguanosine at position 6 in a broad range of tRNA substrates and at position 7 of tRNA(Trp). Involved in the pre-rRNA processing steps leading to small-subunit rRNA production. Together with methyltransferase METTL5, specifically methylates the 6th position of adenine in position 1832 of 18S rRNA. This is Multifunctional methyltransferase subunit TRM112-like protein from Homo sapiens (Human).